Consider the following 390-residue polypeptide: Tuftelin (390 aa).

2 coiled-coil regions span residues 88–126 and 163–352; these read DKMTHEKNIDQLKSEVQYIQEARNCLQKLREDISSKLDR and PSMS…EKQV. The disordered stretch occupies residues 356-383; sequence NFSTQARAKTENLGSVRISKPPSPKPMP.

It belongs to the tuftelin family. In terms of assembly, interacts with TFIP11. May form oligomers. As to expression, ameloblasts, and also non-odontogenic tissues including kidney, lung, liver and testis.

It is found in the secreted. Functionally, involved in the structural organization of the epidermis. Involved in the mineralization and structural organization of enamel. This chain is Tuftelin (Tuft1), found in Mus musculus (Mouse).